The following is a 156-amino-acid chain: Oxidized purine nucleoside triphosphate hydrolase (156 aa).

The Nudix hydrolase domain maps to Thr3–Lys132. Residue Thr8 participates in 2-oxo-dATP binding. Lys23 serves as a coordination point for 8-oxo-dGTP. Residues Asn33 and Phe35 to Lys38 each bind 2-oxo-dATP. Mg(2+)-binding residues include Gly36, Glu52, Glu55, Glu56, and Glu100. Positions Gly37–Gly58 match the Nudix box motif. Trp117 to Asp120 lines the 2-oxo-dATP pocket.

This sequence belongs to the Nudix hydrolase family. In terms of assembly, monomer. It depends on Mg(2+) as a cofactor.

Its subcellular location is the cytoplasm. The protein localises to the nucleus. The protein resides in the nucleus membrane. It localises to the cytoplasmic vesicle. It is found in the secretory vesicle. Its subcellular location is the acrosome. It catalyses the reaction 2-oxo-dATP + H2O = 2-oxo-dAMP + diphosphate + H(+). The catalysed reaction is 2-oxo-ATP + H2O = 2-oxo-AMP + diphosphate + H(+). It carries out the reaction 8-oxo-dGTP + H2O = 8-oxo-dGMP + diphosphate + H(+). The enzyme catalyses 8-oxo-dATP + H2O = 8-oxo-dAMP + diphosphate + H(+). It catalyses the reaction O(6)-methyl-dGTP + H2O = O(6)-methyl-dGMP + diphosphate + H(+). The catalysed reaction is N(6)-methyl-dATP + H2O = N(6)-methyl-dAMP + diphosphate + H(+). It carries out the reaction N(6)-methyl-ATP + H2O = N(6)-methyl-AMP + diphosphate + H(+). Oxidized purine nucleoside triphosphate hydrolase which is a prominent sanitizer of the oxidized nucleotide pool. Catalyzes the hydrolysis of 2-oxo-dATP (2-hydroxy-dATP) into 2-oxo-dAMP. Also has a significant hydrolase activity toward 2-oxo-ATP, 8-oxo-dGTP and 8-oxo-dATP. Through the hydrolysis of oxidized purine nucleoside triphosphates, prevents their incorporation into DNA and the subsequent transversions A:T to C:G and G:C to T:A. Also catalyzes the hydrolysis of methylated purine nucleoside triphosphate preventing their integration into DNA. Through this antimutagenic activity protects cells from oxidative stress. This Canis lupus familiaris (Dog) protein is Oxidized purine nucleoside triphosphate hydrolase (NUDT1).